The sequence spans 316 residues: Beta-ketoacyl-[acyl-carrier-protein] synthase III 1 (316 aa).

Catalysis depends on residues cysteine 112 and histidine 243. The tract at residues 244 to 248 (QANYR) is ACP-binding. Residue asparagine 273 is part of the active site.

This sequence belongs to the thiolase-like superfamily. FabH family. As to quaternary structure, homodimer.

It is found in the cytoplasm. It catalyses the reaction malonyl-[ACP] + acetyl-CoA + H(+) = 3-oxobutanoyl-[ACP] + CO2 + CoA. It functions in the pathway lipid metabolism; fatty acid biosynthesis. In terms of biological role, catalyzes the condensation reaction of fatty acid synthesis by the addition to an acyl acceptor of two carbons from malonyl-ACP. Catalyzes the first condensation reaction which initiates fatty acid synthesis and may therefore play a role in governing the total rate of fatty acid production. Possesses both acetoacetyl-ACP synthase and acetyl transacylase activities. Its substrate specificity determines the biosynthesis of branched-chain and/or straight-chain of fatty acids. This chain is Beta-ketoacyl-[acyl-carrier-protein] synthase III 1, found in Vibrio vulnificus (strain YJ016).